We begin with the raw amino-acid sequence, 101 residues long: Small ribosomal subunit protein uS14 (101 aa).

Belongs to the universal ribosomal protein uS14 family. As to quaternary structure, part of the 30S ribosomal subunit. Contacts proteins S3 and S10.

Functionally, binds 16S rRNA, required for the assembly of 30S particles and may also be responsible for determining the conformation of the 16S rRNA at the A site. The polypeptide is Small ribosomal subunit protein uS14 (Pseudomonas putida (strain GB-1)).